The following is a 78-amino-acid chain: Sec-independent protein translocase protein TatA (78 aa).

The helical transmembrane segment at 1 to 21 (MGMPSMPELLIILLIVVLLFG) threads the bilayer. The tract at residues 46 to 78 (DEEEVATENKKEIEEKTTASTTKTTADQDTTKA) is disordered. The segment covering 52–62 (TENKKEIEEKT) has biased composition (basic and acidic residues). A compositionally biased stretch (low complexity) spans 63–78 (TASTTKTTADQDTTKA).

It belongs to the TatA/E family. In terms of assembly, the Tat system comprises two distinct complexes: a TatABC complex, containing multiple copies of TatA, TatB and TatC subunits, and a separate TatA complex, containing only TatA subunits. Substrates initially bind to the TatABC complex, which probably triggers association of the separate TatA complex to form the active translocon.

The protein resides in the cell inner membrane. Its function is as follows. Part of the twin-arginine translocation (Tat) system that transports large folded proteins containing a characteristic twin-arginine motif in their signal peptide across membranes. TatA could form the protein-conducting channel of the Tat system. In Nitratiruptor sp. (strain SB155-2), this protein is Sec-independent protein translocase protein TatA.